Consider the following 892-residue polypeptide: Alanine--tRNA ligase (892 aa).

Zn(2+)-binding residues include H594, H598, C702, and H706.

The protein belongs to the class-II aminoacyl-tRNA synthetase family. Zn(2+) is required as a cofactor.

The protein localises to the cytoplasm. It catalyses the reaction tRNA(Ala) + L-alanine + ATP = L-alanyl-tRNA(Ala) + AMP + diphosphate. Functionally, catalyzes the attachment of alanine to tRNA(Ala) in a two-step reaction: alanine is first activated by ATP to form Ala-AMP and then transferred to the acceptor end of tRNA(Ala). Also edits incorrectly charged Ser-tRNA(Ala) and Gly-tRNA(Ala) via its editing domain. In Pyrobaculum arsenaticum (strain DSM 13514 / JCM 11321 / PZ6), this protein is Alanine--tRNA ligase.